A 407-amino-acid chain; its full sequence is Substance-P receptor (407 aa).

The Extracellular segment spans residues 1–31; sequence MDNVLPGDSDLFPNISTNSSESNQFVQPAWQ. N14 and N18 each carry an N-linked (GlcNAc...) asparagine glycan. A helical transmembrane segment spans residues 32–54; that stretch reads IVLWAAAYTVIVVTSVVGNVVVM. Residues 55 to 64 lie on the Cytoplasmic side of the membrane; it reads WIILAHKRMR. Residues 65–86 form a helical membrane-spanning segment; it reads TVTNYFLVNLAFAEASMAAFNT. Residues 87 to 106 lie on the Extracellular side of the membrane; the sequence is VVNFTYAVHNEWYYGLFYCK. A glycan (N-linked (GlcNAc...) asparagine) is linked at N89. C105 and C180 form a disulfide bridge. The chain crosses the membrane as a helical span at residues 107 to 128; that stretch reads FHNFFPIAAVFASIYSMTAVAF. The Cytoplasmic segment spans residues 129-148; it reads DRYMAIIHPLQPRLSATATK. A helical transmembrane segment spans residues 149 to 169; it reads VVIFVIWVLALLLAFPQGYYS. Residues 170–194 are Extracellular-facing; that stretch reads TTETMPGRVVCMIEWPEHPNRTYEK. N189 carries N-linked (GlcNAc...) asparagine glycosylation. A helical membrane pass occupies residues 195-219; it reads AYHICVTVLIYFLPLLVIGYAYTVV. At 220 to 248 the chain is on the cytoplasmic side; that stretch reads GITLWASEIPGDSSDRYHEQVSAKRKVVK. A helical transmembrane segment spans residues 249–270; sequence MMIVVVCTFAICWLPFHVFFLL. Residues 271–283 are Extracellular-facing; sequence PYINPDLYVKKFI. Residues 284-308 traverse the membrane as a helical segment; that stretch reads QQVYLAIMWLAMSSTMYNPIIYCCL. Residues 309 to 407 are Cytoplasmic-facing; the sequence is NDRFRLGFKH…SSSFYSNMLA (99 aa). C322 carries S-palmitoyl cysteine lipidation. Residues 365 to 407 form a disordered region; that stretch reads HEDEAEEGPKATPSSLDLTSNGSSRSNSKTMTESSSFYSNMLA. The span at 376–407 shows a compositional bias: polar residues; it reads TPSSLDLTSNGSSRSNSKTMTESSSFYSNMLA.

It belongs to the G-protein coupled receptor 1 family. In terms of assembly, interacts with ARRB1.

Its subcellular location is the cell membrane. This is a receptor for the tachykinin neuropeptide substance P. It is probably associated with G proteins that activate a phosphatidylinositol-calcium second messenger system. This is Substance-P receptor (TACR1) from Meriones unguiculatus (Mongolian jird).